Here is a 234-residue protein sequence, read N- to C-terminus: 3-deoxy-manno-octulosonate cytidylyltransferase (234 aa).

The protein belongs to the KdsB family.

The protein resides in the cytoplasm. The enzyme catalyses 3-deoxy-alpha-D-manno-oct-2-ulosonate + CTP = CMP-3-deoxy-beta-D-manno-octulosonate + diphosphate. It participates in nucleotide-sugar biosynthesis; CMP-3-deoxy-D-manno-octulosonate biosynthesis; CMP-3-deoxy-D-manno-octulosonate from 3-deoxy-D-manno-octulosonate and CTP: step 1/1. The protein operates within bacterial outer membrane biogenesis; lipopolysaccharide biosynthesis. Activates KDO (a required 8-carbon sugar) for incorporation into bacterial lipopolysaccharide in Gram-negative bacteria. This chain is 3-deoxy-manno-octulosonate cytidylyltransferase, found in Aquifex aeolicus (strain VF5).